An 87-amino-acid chain; its full sequence is Cytochrome c5 (87 aa).

Heme-binding residues include Cys19, Cys22, His23, and Met63. A disulfide bond links Cys69 and Cys72.

The protein belongs to the cytochrome c family. In terms of assembly, homodimer. In terms of processing, binds 1 heme group per subunit.

It is unreactive with cytochrome c reductase or oxidase but seems to function as an intermediate in nitrate respiration of facultative anaerobic pseudmonads. This is Cytochrome c5 from Ectopseudomonas mendocina (Pseudomonas mendocina).